A 215-amino-acid chain; its full sequence is UPF0502 protein YceH (215 aa).

Belongs to the UPF0502 family.

The polypeptide is UPF0502 protein YceH (Salmonella paratyphi A (strain ATCC 9150 / SARB42)).